The sequence spans 286 residues: Versiconal hemiacetal acetate esterase stcI (286 aa).

The Involved in the stabilization of the negatively charged intermediate by the formation of the oxyanion hole signature appears at 54 to 56; the sequence is HAG. Catalysis depends on residues serine 123, aspartate 226, and histidine 256.

Belongs to the 'GDXG' lipolytic enzyme family.

The catalysed reaction is (2S,3S)-versiconal hemiacetal acetate + H2O = (2S-3S)-versiconal hemiacetal + acetate + H(+). It catalyses the reaction (3S)-versiconol acetate + H2O = (S)-versiconol + acetate + H(+). Its pathway is mycotoxin biosynthesis; sterigmatocystin biosynthesis. Its function is as follows. Esterase; part of the gene cluster that mediates the biosynthesis of sterigmatocystin (ST), a polyketide-derived furanocoumarin which is part of the most toxic and carcinogenic compounds among the known mycotoxins. The first step in the biosynthesis of sterigmatocystin is the production of hexanoate by the fatty acid synthase (FAS) units stcJ and stcK. The polyketide backbone is assembled by the non-reducing polyketide synthase stcA by condensation of the starter hexanoyl-CoA and 7 malonyl-CoA extender units followed by cyclization and release of norsolorinic acid. Norsolorinic acid is the first stable intermediate in the biosynthesis of sterigmatocystin and is converted into averantin (AVN) by the ketoreductase stcE which reduces the hexanoate ketone to an alcohol. Averantin is then oxidized into 5'-hydroxyaverantin (HAVN) by the cytochrome P450 monooxygenase stcF. 5'-hydroxyaverantin is further converted to 5'-oxyaverantin (OAVN) by the 5'-hydroxyaverantin dehydrogenase stcG. The next step is the conversion of OAVN into averufin (AVF) which is catalyzed by a yet to be identified enzyme. The cytochrome P450 monooxygenase stcB and the flavin-binding monooxygenase stcW are both required for the conversion of averufin to 1-hydroxyversicolorone. The esterase stcI probably catalyzes the formation of versiconal hemiacetal acetate from 1-hydroxyversicolorone. The oxydoreductase stcN then probably catalyzes the biosynthetic step from versiconal to versicolorin B (VERB). The next step is performed by the versicolorin B desaturase stcL to produce versicolorin A (VERA). The ketoreductase stcU and the cytochrome P450 monooxygenase stcS are involved in the conversion of versicolorin A to demethylsterigmatocystin. The Baeyer-Villiger oxidas stcQ and the reductase stcR might be involved in the biosynthetic step from versicolorin A to demethylsterigmatocystin. The final step in the biosynthesis of sterigmatocystin is the methylation of demethylsterigmatocystin catalyzed by the methyltransferase stcP. The polypeptide is Versiconal hemiacetal acetate esterase stcI (Emericella nidulans (strain FGSC A4 / ATCC 38163 / CBS 112.46 / NRRL 194 / M139) (Aspergillus nidulans)).